Consider the following 321-residue polypeptide: Tetraketide alpha-pyrone reductase 2 (321 aa).

Ser-2 is subject to N-acetylserine. Residues 4–28, Lys-40, and Tyr-160 each bind NADP(+); that span reads YLVT…GHTV.

Belongs to the NAD(P)-dependent epimerase/dehydratase family. Dihydroflavonol-4-reductase subfamily.

It is found in the cytoplasm. In terms of biological role, may be involved in the biosynthesis of hydroxylated tetraketide compounds that serve as sporopollenin precursors (the main constituents of exine). Acts on tetraketide alpha-pyrones and reduces the carbonyl function on the tetraketide alkyl chain to a secondary alcohol function. This Arabidopsis thaliana (Mouse-ear cress) protein is Tetraketide alpha-pyrone reductase 2 (TKPR2).